A 132-amino-acid chain; its full sequence is Large-conductance mechanosensitive channel (132 aa).

2 consecutive transmembrane segments (helical) span residues 10 to 30 and 76 to 96; these read FAVK…SAFG and GNFI…FLAI.

This sequence belongs to the MscL family. Homopentamer.

It is found in the cell inner membrane. Its function is as follows. Channel that opens in response to stretch forces in the membrane lipid bilayer. May participate in the regulation of osmotic pressure changes within the cell. This chain is Large-conductance mechanosensitive channel, found in Campylobacter hominis (strain ATCC BAA-381 / DSM 21671 / CCUG 45161 / LMG 19568 / NCTC 13146 / CH001A).